The sequence spans 418 residues: Tol-Pal system protein TolB (418 aa).

An N-terminal signal peptide occupies residues 1–21 (MKLFVQLVLFISLFIPYSTKA).

Belongs to the TolB family. As to quaternary structure, the Tol-Pal system is composed of five core proteins: the inner membrane proteins TolA, TolQ and TolR, the periplasmic protein TolB and the outer membrane protein Pal. They form a network linking the inner and outer membranes and the peptidoglycan layer.

The protein localises to the periplasm. In terms of biological role, part of the Tol-Pal system, which plays a role in outer membrane invagination during cell division and is important for maintaining outer membrane integrity. This chain is Tol-Pal system protein TolB, found in Wolbachia pipientis subsp. Culex pipiens (strain wPip).